Consider the following 526-residue polypeptide: Glutamyl-tRNA(Gln) amidotransferase subunit A, mitochondrial (526 aa).

Lys76 (charge relay system) is an active-site residue. A disordered region spans residues 147 to 166; sequence QYREKRKQNSHSENEDSNWL. Ser171 (charge relay system) is an active-site residue. The active-site Acyl-ester intermediate is Ser195.

The protein belongs to the amidase family. GatA subfamily. Subunit of the heterotrimeric GatCAB amidotransferase (AdT) complex, composed of A (QRSL1), B (GATB) and C (GATC) subunits.

The protein localises to the mitochondrion. It carries out the reaction L-glutamyl-tRNA(Gln) + L-glutamine + ATP + H2O = L-glutaminyl-tRNA(Gln) + L-glutamate + ADP + phosphate + H(+). Functionally, allows the formation of correctly charged Gln-tRNA(Gln) through the transamidation of misacylated Glu-tRNA(Gln) in the mitochondria. The reaction takes place in the presence of glutamine and ATP through an activated gamma-phospho-Glu-tRNA(Gln). The chain is Glutamyl-tRNA(Gln) amidotransferase subunit A, mitochondrial from Bos taurus (Bovine).